Here is a 233-residue protein sequence, read N- to C-terminus: 7-cyano-7-deazaguanine synthase (233 aa).

13–23 provides a ligand contact to ATP; it reads LSGGLDSTTCL. Residues C197, C206, C209, and C212 each coordinate Zn(2+).

Belongs to the QueC family. It depends on Zn(2+) as a cofactor.

The catalysed reaction is 7-carboxy-7-deazaguanine + NH4(+) + ATP = 7-cyano-7-deazaguanine + ADP + phosphate + H2O + H(+). It functions in the pathway purine metabolism; 7-cyano-7-deazaguanine biosynthesis. Catalyzes the ATP-dependent conversion of 7-carboxy-7-deazaguanine (CDG) to 7-cyano-7-deazaguanine (preQ(0)). The polypeptide is 7-cyano-7-deazaguanine synthase (Anaeromyxobacter sp. (strain Fw109-5)).